A 346-amino-acid chain; its full sequence is MLAARLVCLRTLPSRVFQPTFITKASPLVKNSITKNQWLLTPSREYATKTRIRTHRGKTGQELKEAALEPSLEKVFKIDQMGKWFVAGGAAVGLGALCYYGLGMSNEIGAIEKAVIWPQYVKDRIHSTYMYLAGSIGLTALSALALARSPALMNFMMTGSWMTIGATFAAMIGAGMLVQSISYEQSPGPKHLAWMLHSGVMGAVVAPLTILGGPLLLRAAWYTAGIVGGLSTVAMCAPSEKFLNMGAPLGVGLGLVFASSLGSMFLPPTSVAGATLYSVAMYGGLVLFSMFLLYDTQKVVKRAEITPAYGAQKYDPINSMLTIYMDTLNIFMRVATMLATGSNRKK.

Residues methionine 1–glutamate 45 constitute a mitochondrion transit peptide. Over tyrosine 46–lysine 83 the chain is Mitochondrial matrix. A helical membrane pass occupies residues tryptophan 84–methionine 104. Residues serine 105 to histidine 126 lie on the Mitochondrial intermembrane side of the membrane. The chain crosses the membrane as a helical span at residues serine 127–alanine 147. Over arginine 148 to serine 160 the chain is Mitochondrial matrix. A helical transmembrane segment spans residues tryptophan 161–isoleucine 181. At serine 182 to histidine 191 the chain is on the mitochondrial intermembrane side. Residues leucine 192–glycine 212 traverse the membrane as a helical segment. Residues glycine 213–proline 214 lie on the Mitochondrial matrix side of the membrane. The helical transmembrane segment at leucine 215–methionine 235 threads the bilayer. Over cysteine 236–methionine 245 the chain is Mitochondrial intermembrane. Residues glycine 246–leucine 266 form a helical membrane-spanning segment. The Mitochondrial matrix portion of the chain corresponds to proline 267–alanine 272. Residues glycine 273–leucine 293 form a helical membrane-spanning segment. The Mitochondrial intermembrane segment spans residues tyrosine 294–lysine 346.

The protein belongs to the BI1 family. In terms of assembly, interacts with LETM1 and AFG3L2. In terms of processing, undergoes AFG3L2-mediated proteolytic degradation, upon hyperpolarization of mitochondria.

The protein resides in the mitochondrion inner membrane. Its function is as follows. Plays an important role in maintenance of mitochondrial morphology and in mediating either calcium or potassium/proton antiport. Mediates proton-dependent calcium efflux from mitochondrion. Also functions as an electroneutral mitochondrial proton/potassium exchanger. Required for the mitochondrial tubular network and cristae organization. Involved in apoptotic release of cytochrome c. Inhibits AFG3L2 proteolytic activity, stimulating respiration and stabilizing respiratory enzymes in actively respiring mitochondria. However, when mitochondria become hyperpolarized, GHITM loses its inhibitory activity toward AFG3L2 and the now active AFG3L2 turns first on GHITM and, if hyperpolarization persists, on other proteins of the mitochondria, leading to a broad remodeling of the proteome. The sequence is that of Growth hormone-inducible transmembrane protein (Ghitm) from Rattus norvegicus (Rat).